Reading from the N-terminus, the 102-residue chain is Carboxysome shell protein CcmK2 (102 aa).

The BMC domain occupies Ala4 to Pro90.

This sequence belongs to the bacterial microcompartments protein family. CcmK subfamily. As to quaternary structure, homohexamer. Stacked hexamers, with the concave faces together, have also been crystallized. Interacts preferentially with itself, then with CcmK1 and CcmK4a in vitro. May interact with CcmL, this occurs at very high CcmK2 concentrations. Interacts with CcmN and CcmO in the carboxysome.

The protein resides in the carboxysome. Probably the major shell protein of the carboxysome, a polyhedral inclusion where RuBisCO (ribulose bisphosphate carboxylase, rbcL-rbcS) is sequestered. Assembles into hexamers which make sheets that form the facets of the polyhedral carboxysome. The hexamer central pore probably regulates metabolite flux. This is Carboxysome shell protein CcmK2 from Thermosynechococcus vestitus (strain NIES-2133 / IAM M-273 / BP-1).